A 341-amino-acid chain; its full sequence is L-threonine 3-dehydrogenase (341 aa).

C38 contacts Zn(2+). Catalysis depends on charge relay system residues T40 and H43. Positions 63, 64, 93, 96, 99, and 107 each coordinate Zn(2+). NAD(+) contacts are provided by residues I175, D195, R200, 262–264 (LGI), and 286–287 (IY).

It belongs to the zinc-containing alcohol dehydrogenase family. Homotetramer. Requires Zn(2+) as cofactor.

Its subcellular location is the cytoplasm. It carries out the reaction L-threonine + NAD(+) = (2S)-2-amino-3-oxobutanoate + NADH + H(+). It functions in the pathway amino-acid degradation; L-threonine degradation via oxydo-reductase pathway; glycine from L-threonine: step 1/2. Functionally, catalyzes the NAD(+)-dependent oxidation of L-threonine to 2-amino-3-ketobutyrate. The chain is L-threonine 3-dehydrogenase from Shewanella sp. (strain W3-18-1).